A 440-amino-acid polypeptide reads, in one-letter code: Microtubule-associated tumor suppressor 1 homolog (440 aa).

A coiled-coil region spans residues 106-401; sequence IQHLLSEREE…RLSMENEELL (296 aa). Ser373, Ser394, Ser415, Ser425, Ser429, Ser431, Ser433, Ser434, and Ser438 each carry phosphoserine. The interval 407–440 is disordered; that stretch reads GDLCSPKRSPTSSAIPFQSPRNSGSFSSPSISPR. A compositionally biased stretch (low complexity) spans 425–440; the sequence is SPRNSGSFSSPSISPR.

The protein belongs to the MTUS1 family. As to quaternary structure, homodimer. Interacts with AGTR2. Interacts with PTPN6. In terms of tissue distribution, present in neurons (at protein level).

It is found in the mitochondrion. The protein resides in the golgi apparatus. It localises to the cell membrane. The protein localises to the nucleus. Cooperates with AGTR2 to inhibit ERK2 activation and cell proliferation. May be required for AGTR2 cell surface expression. Together with PTPN6, induces UBE2V2 expression upon angiotensin-II stimulation. This is Microtubule-associated tumor suppressor 1 homolog (Mtus1) from Rattus norvegicus (Rat).